Reading from the N-terminus, the 593-residue chain is A-type ATP synthase subunit A (593 aa).

Position 236-243 (236-243 (GPFGSGKT)) interacts with ATP.

It belongs to the ATPase alpha/beta chains family. In terms of assembly, has multiple subunits with at least A(3), B(3), C, D, E, F, H, I and proteolipid K(x).

The protein resides in the cell membrane. It carries out the reaction ATP + H2O + 4 H(+)(in) = ADP + phosphate + 5 H(+)(out). Its function is as follows. Component of the A-type ATP synthase that produces ATP from ADP in the presence of a proton gradient across the membrane. The A chain is the catalytic subunit. This chain is A-type ATP synthase subunit A, found in Pyrobaculum arsenaticum (strain DSM 13514 / JCM 11321 / PZ6).